The chain runs to 1202 residues: Calmodulin-binding transcription activator 2 (1202 aa).

A DNA-binding region (CG-1) is located at residues 30 to 155; the sequence is RCPLLPPERL…YLNVPALEDC (126 aa). Positions 79–86 match the Nuclear localization signal motif; it reads RKKVKYRK. 3 disordered regions span residues 263–322, 361–409, and 421–491; these read SIPH…SRGG, GTEP…AHTP, and PQAA…LFGG. Over residues 270-283 the composition is skewed to pro residues; sequence PEPPPLIAPLPPEL. Low complexity-rich tracts occupy residues 289 to 299 and 313 to 322; these read SPSSSSSSSSS and TSRGGSSRGG. Pro residues-rich tracts occupy residues 365-374 and 460-476; these read SAPPAPPSPA and PPIP…PAPL. One can recognise an IPT/TIG domain in the interval 537-615; the sequence is DFSPEWSYPE…LSASVLFEYR (79 aa). ANK repeat units lie at residues 712 to 745, 757 to 787, and 791 to 821; these read MSLL…DLEQ, CTPL…SIPD, and RLPL…SVEP. Disordered stretches follow at residues 817 to 874 and 906 to 929; these read PSVE…ASEM and PLSS…ADSP. Low complexity-rich tracts occupy residues 826–846 and 906–917; these read SPPS…SELS and PLSSLPALPPAS. IQ domains follow at residues 1049–1078 and 1102–1131; these read YEAA…AAVI and TQAA…AVLI.

This sequence belongs to the CAMTA family. In terms of assembly, may interact with calmodulin. Detected in brain. Expressed at constant levels throughout the cell cycle in neuroblastoma cell lines.

It localises to the nucleus. In terms of biological role, transcription activator. May act as tumor suppressor. This Homo sapiens (Human) protein is Calmodulin-binding transcription activator 2 (CAMTA2).